Here is a 337-residue protein sequence, read N- to C-terminus: Inositol 2-dehydrogenase (337 aa).

This sequence belongs to the Gfo/Idh/MocA family. Homotetramer.

It catalyses the reaction myo-inositol + NAD(+) = scyllo-inosose + NADH + H(+). In terms of biological role, involved in the oxidation of myo-inositol (MI) to 2-keto-myo-inositol (2KMI or 2-inosose). The protein is Inositol 2-dehydrogenase of Klebsiella pneumoniae subsp. pneumoniae (strain ATCC 700721 / MGH 78578).